A 146-amino-acid polypeptide reads, in one-letter code: Single-stranded DNA-binding protein 1-A, mitochondrial (146 aa).

The N-terminal 17 residues, 1-17 (MFHRPALQVFRQFARCQ), are a transit peptide targeting the mitochondrion. One can recognise an SSB domain in the interval 28–140 (INKVQLLGRV…IIADNIIFLS (113 aa)).

Homotetramer.

Its subcellular location is the mitochondrion. It localises to the mitochondrion matrix. It is found in the mitochondrion nucleoid. Binds preferentially and cooperatively to pyrimidine rich single-stranded DNA (ss-DNA). Required to maintain the copy number of mitochondrial DNA (mtDNA) and plays crucial roles during mtDNA replication that stimulate activity of the DNA polymerase at the replication fork. May also function in mtDNA repair. The sequence is that of Single-stranded DNA-binding protein 1-A, mitochondrial (ssbp1-a) from Xenopus laevis (African clawed frog).